A 173-amino-acid chain; its full sequence is Membrane-bound hydrogenase subunit beta (173 aa).

Belongs to the complex I 30 kDa subunit family. In terms of assembly, the membrane-bound hydrogenase complex is composed of MbhK and MbhL, and may also contain MbhJ. Ni(2+) is required as a cofactor.

The protein resides in the cell membrane. The catalysed reaction is H2 + 2 oxidized [2Fe-2S]-[ferredoxin] = 2 reduced [2Fe-2S]-[ferredoxin] + 2 H(+). Its activity is regulated as follows. Inhibited by 0.1 mM Cu(2+). In terms of biological role, beta subunit of a hydrogen-evolving hydrogenase that utilizes protons both as a substrate for hydrogen production and proton translocation. Acts by coupling the redox reaction via ferredoxin and iron-sulfur (Fe-S) clusters to proton translocation across the membrane thereby conserving the redox energy in a proton gradient. The chain is Membrane-bound hydrogenase subunit beta from Pyrococcus furiosus (strain ATCC 43587 / DSM 3638 / JCM 8422 / Vc1).